Consider the following 341-residue polypeptide: tRNA N6-adenosine threonylcarbamoyltransferase (341 aa).

Fe cation is bound by residues His-111 and His-115. Residues 134–138, Asp-167, Gly-180, and Asn-276 contribute to the substrate site; that span reads LVSGG. Asp-304 lines the Fe cation pocket.

It belongs to the KAE1 / TsaD family. Requires Fe(2+) as cofactor.

The protein localises to the cytoplasm. It catalyses the reaction L-threonylcarbamoyladenylate + adenosine(37) in tRNA = N(6)-L-threonylcarbamoyladenosine(37) in tRNA + AMP + H(+). Required for the formation of a threonylcarbamoyl group on adenosine at position 37 (t(6)A37) in tRNAs that read codons beginning with adenine. Is involved in the transfer of the threonylcarbamoyl moiety of threonylcarbamoyl-AMP (TC-AMP) to the N6 group of A37, together with TsaE and TsaB. TsaD likely plays a direct catalytic role in this reaction. The chain is tRNA N6-adenosine threonylcarbamoyltransferase from Pseudomonas fluorescens (strain SBW25).